We begin with the raw amino-acid sequence, 499 residues long: L-arabinose isomerase (499 aa).

Mn(2+)-binding residues include Glu-306, Glu-333, His-350, and His-449.

Belongs to the arabinose isomerase family. Mn(2+) serves as cofactor.

It carries out the reaction beta-L-arabinopyranose = L-ribulose. Its pathway is carbohydrate degradation; L-arabinose degradation via L-ribulose; D-xylulose 5-phosphate from L-arabinose (bacterial route): step 1/3. Its function is as follows. Catalyzes the conversion of L-arabinose to L-ribulose. The chain is L-arabinose isomerase from Tolumonas auensis (strain DSM 9187 / NBRC 110442 / TA 4).